The following is a 90-amino-acid chain: Small ribosomal subunit protein bS20 (90 aa).

This sequence belongs to the bacterial ribosomal protein bS20 family.

Binds directly to 16S ribosomal RNA. In Acidiphilium cryptum (strain JF-5), this protein is Small ribosomal subunit protein bS20.